Reading from the N-terminus, the 517-residue chain is Alpha,alpha-trehalose-phosphate synthase [UDP-forming] 1 (517 aa).

Tyr98 and Asp152 together coordinate D-glucose 6-phosphate. UDP contacts are provided by Arg288 and Lys293. UDP-alpha-D-glucose contacts are provided by Arg288 and Lys293. D-glucose 6-phosphate is bound at residue Arg326. Residue 387 to 395 (DGMNLVAYE) coordinates UDP-alpha-D-glucose. Position 391–395 (391–395 (LVAYE)) interacts with UDP. A disordered region spans residues 486 to 517 (FHAKKASFSDNNSENGEPSNGVETPAQEQVAQ). A compositionally biased stretch (polar residues) spans 493-517 (FSDNNSENGEPSNGVETPAQEQVAQ).

This sequence belongs to the glycosyltransferase 20 family.

It catalyses the reaction D-glucose 6-phosphate + UDP-alpha-D-glucose = alpha,alpha-trehalose 6-phosphate + UDP + H(+). The protein operates within carbohydrate biosynthesis. In terms of biological role, synthase catalytic subunit of the trehalose synthase complex that catalyzes the production of trehalose from glucose-6-phosphate and UDP-alpha-D-glucose in a two step process. The polypeptide is Alpha,alpha-trehalose-phosphate synthase [UDP-forming] 1 (Aspergillus niger).